A 406-amino-acid polypeptide reads, in one-letter code: MKTLNETTQQSTRAGRYGKDFGGQYIPETLMTELEKVTKAFNDLKDNPEFKAELNDLLVNYANRPSLLYYAKNMTEDLGGAKIYLKREDLNHTGAHKINNVIGQALLAKHLGKKRLIAETGAGQHGVATATIAALMGMDCEIFMGKEDTDRQKLNVYRMELLGAKVHPVTSGSMVLKDAVNATLQEWASRSDDTFYVLGSAVGPAPFPEMVKHFQSVISTESKQQLQAKEARLPDMVVACVGGGSNAIGSFAAYIDDPSVQLVGVEAAGKGVDTDRTAATIERGSVGIFHGMKSLFMQNEDGQIDPVYSISAGLDYPGVGPEHAALAQEGRAQYVGITDDEAVEAFTYIAKQEGIVAAIESCHAIAYVEKIAPQMAKDQIIICTLSGRGDKDVASIAKYKGVDVDE.

Position 97 is an N6-(pyridoxal phosphate)lysine (K97).

The protein belongs to the TrpB family. As to quaternary structure, tetramer of two alpha and two beta chains. It depends on pyridoxal 5'-phosphate as a cofactor.

The enzyme catalyses (1S,2R)-1-C-(indol-3-yl)glycerol 3-phosphate + L-serine = D-glyceraldehyde 3-phosphate + L-tryptophan + H2O. It functions in the pathway amino-acid biosynthesis; L-tryptophan biosynthesis; L-tryptophan from chorismate: step 5/5. Functionally, the beta subunit is responsible for the synthesis of L-tryptophan from indole and L-serine. The chain is Tryptophan synthase beta chain from Lacticaseibacillus paracasei (strain ATCC 334 / BCRC 17002 / CCUG 31169 / CIP 107868 / KCTC 3260 / NRRL B-441) (Lactobacillus paracasei).